The sequence spans 362 residues: Protein ABHD12B (362 aa).

This sequence belongs to the serine esterase family.

This Homo sapiens (Human) protein is Protein ABHD12B.